A 302-amino-acid polypeptide reads, in one-letter code: Genome polyprotein (302 aa).

Over residues 28-46 (ENLDTGKDSKKDTSGKGDK) the composition is skewed to basic and acidic residues. Residues 28–72 (ENLDTGKDSKKDTSGKGDKPQNSQTGQGSKEQTKIGTVSKDVNVG) form a disordered region. Residues 47–63 (PQNSQTGQGSKEQTKIG) are compositionally biased toward polar residues.

The protein belongs to the potyviridae genome polyprotein family. Genome polyprotein of potyviruses undergoes post-translational proteolytic processing by the main proteinase NIa-pro resulting in the production of at least ten individual proteins. The P1 proteinase and the HC-pro cleave only their respective C-termini autocatalytically. 6K1 is essential for proper proteolytic separation of P3 from CI.

The protein resides in the virion. It catalyses the reaction RNA(n) + a ribonucleoside 5'-triphosphate = RNA(n+1) + diphosphate. Functionally, an RNA-dependent RNA polymerase that plays an essential role in the virus replication. In terms of biological role, involved in aphid transmission, cell-to-cell and systemis movement, encapsidation of the viral RNA and in the regulation of viral RNA amplification. In Watermelon mosaic virus II (isolate Australia), this protein is Genome polyprotein.